The chain runs to 258 residues: Acyl-[acyl-carrier-protein]--UDP-N-acetylglucosamine O-acyltransferase (258 aa).

This sequence belongs to the transferase hexapeptide repeat family. LpxA subfamily. Homotrimer.

Its subcellular location is the cytoplasm. The catalysed reaction is a (3R)-hydroxyacyl-[ACP] + UDP-N-acetyl-alpha-D-glucosamine = a UDP-3-O-[(3R)-3-hydroxyacyl]-N-acetyl-alpha-D-glucosamine + holo-[ACP]. Its pathway is glycolipid biosynthesis; lipid IV(A) biosynthesis; lipid IV(A) from (3R)-3-hydroxytetradecanoyl-[acyl-carrier-protein] and UDP-N-acetyl-alpha-D-glucosamine: step 1/6. Functionally, involved in the biosynthesis of lipid A, a phosphorylated glycolipid that anchors the lipopolysaccharide to the outer membrane of the cell. This chain is Acyl-[acyl-carrier-protein]--UDP-N-acetylglucosamine O-acyltransferase, found in Halorhodospira halophila (strain DSM 244 / SL1) (Ectothiorhodospira halophila (strain DSM 244 / SL1)).